Here is a 310-residue protein sequence, read N- to C-terminus: Glutaminase (310 aa).

Residues Ser-67, Asn-118, Glu-161, Asn-168, Tyr-192, Tyr-244, and Val-262 each contribute to the substrate site.

It belongs to the glutaminase family. Homotetramer.

The enzyme catalyses L-glutamine + H2O = L-glutamate + NH4(+). This Legionella pneumophila subsp. pneumophila (strain Philadelphia 1 / ATCC 33152 / DSM 7513) protein is Glutaminase.